A 251-amino-acid chain; its full sequence is Hydroxyacylglutathione hydrolase (251 aa).

Residues H53, H55, D57, H58, H110, D127, and H165 each coordinate Zn(2+).

This sequence belongs to the metallo-beta-lactamase superfamily. Glyoxalase II family. In terms of assembly, monomer. Zn(2+) serves as cofactor.

It carries out the reaction an S-(2-hydroxyacyl)glutathione + H2O = a 2-hydroxy carboxylate + glutathione + H(+). Its pathway is secondary metabolite metabolism; methylglyoxal degradation; (R)-lactate from methylglyoxal: step 2/2. Functionally, thiolesterase that catalyzes the hydrolysis of S-D-lactoyl-glutathione to form glutathione and D-lactic acid. The chain is Hydroxyacylglutathione hydrolase from Pectobacterium atrosepticum (strain SCRI 1043 / ATCC BAA-672) (Erwinia carotovora subsp. atroseptica).